Reading from the N-terminus, the 137-residue chain is Large-conductance mechanosensitive channel (137 aa).

The next 2 helical transmembrane spans lie at 10-30 (FAMRGNVVDLAVGVIIGAAFG) and 76-96 (GVFIQNVFDFIIVAFAIFMAI).

The protein belongs to the MscL family. Homopentamer.

The protein resides in the cell inner membrane. Its function is as follows. Channel that opens in response to stretch forces in the membrane lipid bilayer. May participate in the regulation of osmotic pressure changes within the cell. The sequence is that of Large-conductance mechanosensitive channel from Klebsiella pneumoniae subsp. pneumoniae (strain ATCC 700721 / MGH 78578).